The chain runs to 445 residues: 2-oxoisovalerate dehydrogenase subunit alpha, mitochondrial (445 aa).

A mitochondrion-targeting transit peptide spans 1 to 45; that stretch reads MAVAIAAARVWRLNRGLSQAALLLLRRPGARGLARSHPRRQQQQF. Residues 33–54 form a disordered region; the sequence is LARSHPRRQQQQFSSLDDKPQF. Residues tyrosine 158 and arginine 159 each coordinate thiamine diphosphate. Serine 206 serves as a coordination point for K(+). Serine 207 contacts thiamine diphosphate. 3 residues coordinate K(+): proline 208, threonine 211, and glutamine 212. Glutamate 238 provides a ligand contact to Mg(2+). Residues glycine 239, alanine 240, and arginine 265 each coordinate thiamine diphosphate. Mg(2+) is bound by residues asparagine 267 and tyrosine 269. Histidine 336 contributes to the thiamine diphosphate binding site. Phosphoserine; by BCKDK is present on serine 337. Position 338 is a phosphothreonine (threonine 338). Phosphoserine is present on residues serine 339 and serine 347. N6-acetyllysine; alternate is present on lysine 356. At lysine 356 the chain carries N6-succinyllysine; alternate. N6-succinyllysine is present on lysine 380.

This sequence belongs to the BCKDHA family. In terms of assembly, heterotetramer of 2 alpha/BCKDHA and 2 beta chains/BCKDHB that forms the branched-chain alpha-keto acid decarboxylase (E1) component of the BCKD complex. The branched-chain alpha-ketoacid dehydrogenase is a large complex composed of three major building blocks E1, E2 and E3. It is organized around E2, a 24-meric cubic core composed of DBT, to which are associated 6 to 12 copies of E1, and approximately 6 copies of the dehydrogenase E3, a DLD dimer. Interacts with PPM1K. The cofactor is thiamine diphosphate. Mg(2+) serves as cofactor. In terms of processing, phosphorylated at Ser-337 by BCKDK and dephosphorylated by protein phosphatase PPM1K.

Its subcellular location is the mitochondrion matrix. It catalyses the reaction N(6)-[(R)-lipoyl]-L-lysyl-[protein] + 3-methyl-2-oxobutanoate + H(+) = N(6)-[(R)-S(8)-2-methylpropanoyldihydrolipoyl]-L-lysyl-[protein] + CO2. Together with BCKDHB forms the heterotetrameric E1 subunit of the mitochondrial branched-chain alpha-ketoacid dehydrogenase (BCKD) complex. The BCKD complex catalyzes the multi-step oxidative decarboxylation of alpha-ketoacids derived from the branched-chain amino-acids valine, leucine and isoleucine producing CO2 and acyl-CoA which is subsequently utilized to produce energy. The E1 subunit catalyzes the first step with the decarboxylation of the alpha-ketoacid forming an enzyme-product intermediate. A reductive acylation mediated by the lipoylamide cofactor of E2 extracts the acyl group from the E1 active site for the next step of the reaction. The chain is 2-oxoisovalerate dehydrogenase subunit alpha, mitochondrial (BCKDHA) from Pan troglodytes (Chimpanzee).